A 607-amino-acid chain; its full sequence is MAQIVRQSKFRHVFCKPVKHESCMSDIRVTEITWDSLFCDVNPKFIAFINRGAGGPFMVIPVNKIGRVDKDYPFVDAHKAPCLEVAWSPFNDNVIASCSEDTTCKVWVIPDRGLNRNLSEPAVELTGHQKRVNTIAWHPVANNVLLTAGGENVMFMWNVGTGEALLEISGHPDQIWSINFNFDGSQFVTTCKDKKIRILDSHTGEVVHEGMGHEGVKPQRAIFVKDGLILSTGFTKRSERLYALRAPEDLSTPIVEEELDTSNGVVFPFYDEDSGLVYLVGKGDCAIRYYEVNNDAPYVHYINTYTTNEPQRAVGFQSKRGMSSEENEINRIYKLTTKGVVDILQFFVPRKSDLFQHDLYPDTRSTIPALTAEEFMEGKNAAPNRQPVNAAAAAAAAKPKVQVAKKANILSTLAPTAAESVPTQSYSERPPSSQQPSPRPSASPRPRPVVDDDMGIVTMREAPPSRPASSRASRTEIPPKEESKVDPMKPKQAVQLKSRAARDEPGGGAQTAGQRRAAAELERIKRDQSRTADEDNTLAPPPSSSRASASPRGSVSAASDVGHVPQNMDELLEDLMKMKAVLRQHERRIRMLEEEIADRNMSNAYSF.

3 WD repeats span residues 77-117 (AHKA…LNRN), 127-167 (GHQK…ALLE), and 170-209 (GHPDQIWSINFNFDGSQFVTTCKDKKIRILDSHTGEVVHE). Residues 415-564 (PTAAESVPTQ…VSAASDVGHV (150 aa)) form a disordered region. The span at 424–436 (QSYSERPPSSQQP) shows a compositional bias: low complexity. Residues 437 to 447 (SPRPSASPRPR) are compositionally biased toward pro residues. 2 stretches are compositionally biased toward basic and acidic residues: residues 473-489 (SRTEIPPKEESKVDPMK) and 517-533 (AAAELERIKRDQSRTAD). Residues 544–559 (SSRASASPRGSVSAAS) show a composition bias toward low complexity. The stretch at 563-602 (HVPQNMDELLEDLMKMKAVLRQHERRIRMLEEEIADRNMS) forms a coiled coil.

This sequence belongs to the WD repeat coronin family.

The protein resides in the cytoplasm. It localises to the cytoskeleton. Its function is as follows. Required to direct the migration of Q neuroblasts along the anterior axis of the body during larval development. This is dependent on its asymmetric expression in Q neuroblasts. The sequence is that of Coronin-like protein cor-1 (cor-1) from Caenorhabditis elegans.